The following is a 98-amino-acid chain: Minor capsid protein P13 (98 aa).

Positions 3–23 (KITPFLIAAVVAVIVLAVWLF) are hydrophobic.

In terms of assembly, interacts with the major capsid protein.

It is found in the virion. One of the minor capsid proteins that constitute a network internal to the major capsid proteins and outside the lipid membrane. The minor capsid protein P13 does not serve a cross-linking function between neighboring capsomers, it may play a role in the viral capsid assembly. In Chlorella (PBCV-1), this protein is Minor capsid protein P13.